A 760-amino-acid polypeptide reads, in one-letter code: General transcription and DNA repair factor IIH helicase subunit XPD (760 aa).

One can recognise a Helicase ATP-binding domain in the interval 7–283 (GLLVYFPYDY…KETDEQRLRD (277 aa)). 42–49 (MPSGTGKT) is an ATP binding site. Cysteine 116, cysteine 134, cysteine 155, and cysteine 190 together coordinate [4Fe-4S] cluster. The DEAH box motif lies at 234–237 (DEAH). Positions 438-637 (MDASLAIKPV…TQSRILKARL (200 aa)) are mediates interaction with MMS19.

The protein belongs to the helicase family. RAD3/XPD subfamily. As to quaternary structure, component of the 7-subunit TFIIH core complex composed of XPB/ERCC3, XPD/ERCC2, GTF2H1, GTF2H2, GTF2H3, GTF2H4 and GTF2H5, which is active in NER. The core complex associates with the 3-subunit CDK-activating kinase (CAK) module composed of CCNH/cyclin H, CDK7 and MNAT1 to form the 10-subunit holoenzyme (holo-TFIIH) active in transcription. The interaction with GTF2H2 results in the stimulation of the 5'--&gt;3' helicase activity. Component of the MMXD complex, which includes CIAO1, ERCC2, CIAO2B, MMS19 and SLC25A5. Interacts with CIAO1 and CIAO2B; the interaction WITH CIAO2B is direct. Interacts with ATF7IP. Interacts directly with MMS19. Part of TBP-based Pol II pre-initiation complex (PIC), in which Pol II core assembles with general transcription factors and other specific initiation factors including GTF2E1, GTF2E2, GTF2F1, GTF2F2, TCEA1, ERCC2, ERCC3, GTF2H2, GTF2H3, GTF2H4, GTF2H5, GTF2A1, GTF2A2, GTF2B and TBP; this large multi-subunit PIC complex mediates DNA unwinding and targets Pol II core to the transcription start site where the first phosphodiester bond forms. Mg(2+) serves as cofactor. Requires [4Fe-4S] cluster as cofactor. ISGylated.

The protein localises to the nucleus. Its subcellular location is the cytoplasm. It localises to the cytoskeleton. The protein resides in the spindle. It catalyses the reaction Couples ATP hydrolysis with the unwinding of duplex DNA at the replication fork by translocating in the 5'-3' direction. This creates two antiparallel DNA single strands (ssDNA). The leading ssDNA polymer is the template for DNA polymerase III holoenzyme which synthesizes a continuous strand.. It carries out the reaction ATP + H2O = ADP + phosphate + H(+). ATP-dependent 5'-3' DNA helicase, component of the general transcription and DNA repair factor IIH (TFIIH) core complex, which is involved in general and transcription-coupled nucleotide excision repair (NER) of damaged DNA and, when complexed to CDK-activating kinase (CAK), involved in transcription by RNA polymerase II. In NER, TFIIH acts by opening DNA around the lesion to allow the excision of the damaged oligonucleotide and its replacement by a new DNA fragment. The ATP-dependent helicase activity of XPD/ERCC2 is required for DNA opening. In transcription, TFIIH has an essential role in transcription initiation. When the pre-initiation complex (PIC) has been established, TFIIH is required for promoter opening and promoter escape. Phosphorylation of the C-terminal tail (CTD) of the largest subunit of RNA polymerase II by the kinase module CAK controls the initiation of transcription. XPD/ERCC2 acts by forming a bridge between CAK and the core-TFIIH complex. Involved in the regulation of vitamin-D receptor activity. As part of the mitotic spindle-associated MMXD complex it plays a role in chromosome segregation. Might have a role in aging process and could play a causative role in the generation of skin cancers. The chain is General transcription and DNA repair factor IIH helicase subunit XPD (Ercc2) from Mus musculus (Mouse).